A 455-amino-acid chain; its full sequence is L-serine dehydratase (455 aa).

It belongs to the iron-sulfur dependent L-serine dehydratase family. [4Fe-4S] cluster is required as a cofactor.

The enzyme catalyses L-serine = pyruvate + NH4(+). Its pathway is carbohydrate biosynthesis; gluconeogenesis. This is L-serine dehydratase (sdaA) from Haemophilus influenzae (strain ATCC 51907 / DSM 11121 / KW20 / Rd).